Reading from the N-terminus, the 701-residue chain is Transcription factor PDR8 (701 aa).

The tract at residues 1–22 is disordered; it reads MDGSHFPMKSTTGEPVSSGKKG. Residues 31-59 constitute a DNA-binding region (zn(2)-C6 fungal-type); that stretch reads CAFCRKRKLKCSQARPMCQQCVIRKLPQC.

The protein localises to the cytoplasm. It localises to the nucleus. Functionally, up-regulates the transcription of the genes for ATP-binding cassette (ABC) transporters YOR1 and PDR15, for major facilitator superfamily transporter AZR1, for pleiotropic drug resistance SNG1, for alpha-glucosidase YJL216C and for YLL056C. This chain is Transcription factor PDR8 (PDR8), found in Saccharomyces cerevisiae (strain ATCC 204508 / S288c) (Baker's yeast).